The primary structure comprises 108 residues: DIQMTQTTSSLSASLGDRVTISCRASQDISNYLNWYQQKPDGTVKLLIYYTSRLHSGVPSRFSGSGSGTDYSLTISNLEQEDIATYFCQQGNSLPRTFGGGTKLEIKR.

The interval 1–23 is framework-1; sequence DIQMTQTTSSLSASLGDRVTISC. The cysteines at positions 23 and 88 are disulfide-linked. The tract at residues 24–34 is complementarity-determining-1; it reads RASQDISNYLN. The interval 35–49 is framework-2; it reads WYQQKPDGTVKLLIY. Positions 50–56 are complementarity-determining-2; sequence YTSRLHS. The segment at 57–88 is framework-3; that stretch reads GVPSRFSGSGSGTDYSLTISNLEQEDIATYFC. The complementarity-determining-3 stretch occupies residues 89–97; the sequence is QQGNSLPRT. The interval 98–108 is framework-4; that stretch reads FGGGTKLEIKR.

This is Ig kappa chain V-V region HP R16.7 from Mus musculus (Mouse).